The sequence spans 238 residues: Probable 2-phosphosulfolactate phosphatase (238 aa).

The protein belongs to the ComB family. Mg(2+) serves as cofactor.

The enzyme catalyses (2R)-O-phospho-3-sulfolactate + H2O = (2R)-3-sulfolactate + phosphate. The chain is Probable 2-phosphosulfolactate phosphatase from Clostridium botulinum (strain Eklund 17B / Type B).